The sequence spans 33 residues: Gastrin (33 aa).

The residue at position 1 (Gln1) is a Pyrrolidone carboxylic acid. Residue Phe33 is modified to Phenylalanine amide.

The protein belongs to the gastrin/cholecystokinin family.

Its subcellular location is the secreted. Gastrin stimulates the stomach mucosa to produce and secrete hydrochloric acid and the pancreas to secrete its digestive enzymes. It also stimulates smooth muscle contraction and increases blood circulation and water secretion in the stomach and intestine. The sequence is that of Gastrin (GAST) from Cavia porcellus (Guinea pig).